The following is a 366-amino-acid chain: MAP kinase-activated protein kinase 2 (366 aa).

The Protein kinase domain occupies 30-291; that stretch reads KVTSQVLGLG…ITEFMNHPWI (262 aa). ATP contacts are provided by residues 36 to 44 and Lys59; that span reads LGLGINGKV. A staurosporine-binding site is contributed by 105–107; it reads ECL. Residue Asp152 is the Proton acceptor of the active site. Thr188 is subject to Phosphothreonine; by MAPK14. Ser238 is modified (phosphoserine; by MAPK14). Ser294 is subject to Phosphoserine; by autocatalysis. Positions 294–330 are autoinhibitory helix; sequence STKVPQTPLHTSRVLKEDKERWEDVKEEMTSALATMR. Thr300 bears the Phosphothreonine; by MAPK14 mark. Lys319 is covalently cross-linked (Glycyl lysine isopeptide (Lys-Gly) (interchain with G-Cter in SUMO)). Positions 322–331 match the Nuclear export signal (NES) motif; sequence MTSALATMRV. A p38 MAPK-binding site region spans residues 332–356; that stretch reads DYEQIKIKKIEDASNPLLLKRRKKA. Short sequence motifs (bipartite nuclear localization signal) lie at residues 337–340 and 351–355; these read KIKK and KRRKK.

It belongs to the protein kinase superfamily. CAMK Ser/Thr protein kinase family. Heterodimer with p38-alpha/MAPK14; this heterodimer forms a stable complex: molecules are positioned 'face to face' so that the ATP-binding sites of both kinases are at the heterodimer interface. Interacts with PHC2. Interacts with HSF1. Post-translationally, sumoylation inhibits the protein kinase activity. In terms of processing, phosphorylated and activated by MAP kinase p38-alpha/MAPK14 at Thr-188, Ser-238 and Thr-300.

The protein resides in the cytoplasm. Its subcellular location is the nucleus. The catalysed reaction is L-seryl-[protein] + ATP = O-phospho-L-seryl-[protein] + ADP + H(+). It catalyses the reaction L-threonyl-[protein] + ATP = O-phospho-L-threonyl-[protein] + ADP + H(+). With respect to regulation, activated following phosphorylation by p38-alpha/MAPK14 following various stresses. Inhibited following sumoylation. Specifically inhibited by pyrrolopyridine inhibitors. Functionally, stress-activated serine/threonine-protein kinase involved in cytokine production, endocytosis, reorganization of the cytoskeleton, cell migration, cell cycle control, chromatin remodeling, DNA damage response and transcriptional regulation. Following stress, it is phosphorylated and activated by MAP kinase p38-alpha/MAPK14, leading to phosphorylation of substrates. Phosphorylates serine in the peptide sequence, Hyd-X-R-X(2)-S, where Hyd is a large hydrophobic residue. Phosphorylates ALOX5, CDC25B, CDC25C, CEP131, ELAVL1, HNRNPA0, HSP27/HSPB1, KRT18, KRT20, LIMK1, LSP1, PABPC1, PARN, PDE4A, RCSD1, RPS6KA3, TAB3 and TTP/ZFP36. Phosphorylates HSF1; leading to the interaction with HSP90 proteins and inhibiting HSF1 homotrimerization, DNA-binding and transactivation activities. Mediates phosphorylation of HSP27/HSPB1 in response to stress, leading to dissociation of HSP27/HSPB1 from large small heat-shock protein (sHsps) oligomers and impairment of their chaperone activities and ability to protect against oxidative stress effectively. Involved in inflammatory response by regulating tumor necrosis factor (TNF) and IL6 production post-transcriptionally: acts by phosphorylating AU-rich elements (AREs)-binding proteins ELAVL1, HNRNPA0, PABPC1 and TTP/ZFP36, leading to regulate the stability and translation of TNF and IL6 mRNAs. Phosphorylation of TTP/ZFP36, a major post-transcriptional regulator of TNF, promotes its binding to 14-3-3 proteins and reduces its ARE mRNA affinity leading to inhibition of dependent degradation of ARE-containing transcripts. Phosphorylates CEP131 in response to cellular stress following ultraviolet irradiation which promotes binding of CEP131 to 14-3-3 proteins and inhibits formation of novel centriolar satellites. Also involved in late G2/M checkpoint following DNA damage through a process of post-transcriptional mRNA stabilization: following DNA damage, relocalizes from nucleus to cytoplasm and phosphorylates HNRNPA0 and PARN, leading to stabilization of GADD45A mRNA. Involved in toll-like receptor signaling pathway (TLR) in dendritic cells: required for acute TLR-induced macropinocytosis by phosphorylating and activating RPS6KA3. This chain is MAP kinase-activated protein kinase 2 (MAPKAPK2), found in Oryctolagus cuniculus (Rabbit).